Reading from the N-terminus, the 878-residue chain is Longitudinals lacking protein, isoforms N/O/W/X/Y (878 aa).

A BTB domain is found at 32–97; the sequence is VDCTLAAEGK…MYRGEVNISQ (66 aa). Disordered stretches follow at residues 115-200, 228-340, and 542-583; these read LSDN…SSVL, SSGP…ASAS, and QIVK…QTHA. Composition is skewed to low complexity over residues 162-175, 228-251, 263-293, 329-340, and 546-569; these read SGDV…SSSP, SSGP…LTST, TSST…QTTS, NSATGPNPASAS, and QQHQ…QQQQ. Residues 709–731 form a C2H2-type 1; degenerate zinc finger; it reads YACNVCGKTYKIKGSLKRHKNYE. A C2H2-type 2 zinc finger spans residues 794-816; it reads FQCDFCLKWFKRRSHLNRHKKLH. Residues 826-863 are disordered; that stretch reads SKQKPKTTSGQNLSHDANTDDEVATTNPAATEDESNYP. Over residues 831-841 the composition is skewed to polar residues; the sequence is KTTSGQNLSHD.

By stage 11, isoform W, isoform X and isoform Y are expressed throughout the mesoderm, whereas isoform O is expressed in both mesoderm and ectoderm. From stage 15, expression of isoform O expands to all tissues, whereas expression of isoform W, isoform X and isoform Y becomes restricted during later stages; starting from stage 14 to 16, isoform W, isoform X and isoform Y are expressed in muscle. From stages 14 and 15, isoform W and isoform Y are expressed in the gut. For some isoforms, expression is also seen in specific types of cells in the embryo; isoform O is expressed in the ventral furrow at stage 5 and in the dorsal epidermis from stage 7. Isoform Y shows prominent expression in the gonad starting at stage 15.

The protein resides in the nucleus. Functionally, putative transcription factor required for axon growth and guidance in the central and peripheral nervous systems. Repels CNS axons away from the midline by promoting the expression of the midline repellent sli and its receptor robo. This Drosophila melanogaster (Fruit fly) protein is Longitudinals lacking protein, isoforms N/O/W/X/Y.